The sequence spans 159 residues: Ribosomal RNA large subunit methyltransferase H (159 aa).

S-adenosyl-L-methionine contacts are provided by residues L76, G107, and 126–131; that span reads LSSLTL.

It belongs to the RNA methyltransferase RlmH family. As to quaternary structure, homodimer.

It is found in the cytoplasm. It carries out the reaction pseudouridine(1915) in 23S rRNA + S-adenosyl-L-methionine = N(3)-methylpseudouridine(1915) in 23S rRNA + S-adenosyl-L-homocysteine + H(+). In terms of biological role, specifically methylates the pseudouridine at position 1915 (m3Psi1915) in 23S rRNA. The polypeptide is Ribosomal RNA large subunit methyltransferase H (Cupriavidus pinatubonensis (strain JMP 134 / LMG 1197) (Cupriavidus necator (strain JMP 134))).